Here is a 661-residue protein sequence, read N- to C-terminus: Meiotic coiled-coil protein 1 (661 aa).

5 coiled-coil regions span residues 38 to 78, 100 to 121, 143 to 184, 304 to 320, and 360 to 387; these read LDAL…IIEE, RAIY…ERLS, DIKL…LSIK, ELIQ…EVDL, and LKRL…DNEK. 3 disordered regions span residues 410–446, 467–562, and 573–592; these read QNQE…LRNI, LIDR…TPAS, and LSRT…TPTQ. Positions 414–430 are enriched in low complexity; that stretch reads NISSNDNSKSSPESSPP. Residues 436-445 are compositionally biased toward basic and acidic residues; that stretch reads GKIENKKLRN. Polar residues-rich tracts occupy residues 472–481, 548–562, and 582–592; these read VNQSPDTRSV, HNSV…TPAS, and FTNSLDDTPTQ.

In Schizosaccharomyces pombe (strain 972 / ATCC 24843) (Fission yeast), this protein is Meiotic coiled-coil protein 1 (mcp1).